A 466-amino-acid chain; its full sequence is Teichoic acids export ATP-binding protein TagH (466 aa).

In terms of domain architecture, ABC transporter spans 27–249 (NKAKSLIGSN…YEKFVQWFKK (223 aa)). Residue 63 to 70 (GLNGAGKS) coordinates ATP. Residues 250 to 466 (LPKKEQEKFK…TTEQSDGANQ (217 aa)) are unknown. Disordered stretches follow at residues 356–403 (NMTS…SNQN) and 439–466 (IHPG…GANQ). Over residues 373-384 (PKKKVSQAKKTT) the composition is skewed to basic residues. Residues 385-403 (KVSSTQKNTSSSSSTSNQN) show a composition bias toward low complexity. Positions 403–447 (NTYIVQAGDSLSIIAENHGYSVEEIQQVNPGVDFSVIHPGQEINL) constitute a LysM domain. Residues 449–466 (EPTTSANSTTEQSDGANQ) show a composition bias toward polar residues.

Belongs to the ABC transporter superfamily. Teichoic acids exporter (TC 3.A.1.104.1) family. The complex is composed of two ATP-binding proteins (TagH) and two transmembrane proteins (TagG).

Its subcellular location is the cell membrane. The enzyme catalyses ATP + H2O + teichoic acidSide 1 = ADP + phosphate + teichoic acidSide 2.. Functionally, part of the ABC transporter complex TagGH involved in teichoic acids export. Responsible for energy coupling to the transport system. This is Teichoic acids export ATP-binding protein TagH from Lactococcus lactis subsp. lactis (strain IL1403) (Streptococcus lactis).